Reading from the N-terminus, the 181-residue chain is Ribonuclease HII (181 aa).

The RNase H type-2 domain occupies 1–181 (MICGIDEVGR…SLHRKNFKLI (181 aa)). D6, E7, and D98 together coordinate a divalent metal cation.

Belongs to the RNase HII family. Mn(2+) is required as a cofactor. Mg(2+) serves as cofactor.

Its subcellular location is the cytoplasm. The catalysed reaction is Endonucleolytic cleavage to 5'-phosphomonoester.. Endonuclease that specifically degrades the RNA of RNA-DNA hybrids. The sequence is that of Ribonuclease HII from Borreliella burgdorferi (strain ZS7) (Borrelia burgdorferi).